We begin with the raw amino-acid sequence, 447 residues long: N-succinylarginine dihydrolase (447 aa).

Residues 19-28 (AGLSFGNEAS), Asn-110, and 137-138 (HR) each bind substrate. Glu-174 is a catalytic residue. Substrate is bound at residue Arg-212. His-248 is a catalytic residue. Residues Asp-250 and Asn-359 each coordinate substrate. The Nucleophile role is filled by Cys-365.

The protein belongs to the succinylarginine dihydrolase family. Homodimer.

The enzyme catalyses N(2)-succinyl-L-arginine + 2 H2O + 2 H(+) = N(2)-succinyl-L-ornithine + 2 NH4(+) + CO2. Its pathway is amino-acid degradation; L-arginine degradation via AST pathway; L-glutamate and succinate from L-arginine: step 2/5. Functionally, catalyzes the hydrolysis of N(2)-succinylarginine into N(2)-succinylornithine, ammonia and CO(2). This is N-succinylarginine dihydrolase from Escherichia coli O139:H28 (strain E24377A / ETEC).